Reading from the N-terminus, the 64-residue chain is Large ribosomal subunit protein bL35 (64 aa).

The span at 1–22 (MPKMKSHTGMGKRVRVTGKGKI) shows a compositional bias: basic residues. Residues 1–39 (MPKMKSHTGMGKRVRVTGKGKIVKQQAGLRHNLEKKPST) form a disordered region.

It belongs to the bacterial ribosomal protein bL35 family.

This is Large ribosomal subunit protein bL35 from Salinispora arenicola (strain CNS-205).